We begin with the raw amino-acid sequence, 426 residues long: Endothelin-1 receptor (426 aa).

Positions 1-20 (MGVLCFLASFWLALVGGAIA) are cleaved as a signal peptide. The Extracellular segment spans residues 21–80 (DNAERYSANLSSHVEDFTPFPGTEFNFLGTTLQPPNLALPSNGSMHGYCPQQTKITTAFK). 2 N-linked (GlcNAc...) asparagine glycosylation sites follow: asparagine 29 and asparagine 62. The chain crosses the membrane as a helical span at residues 81 to 102 (YINTVISCTIFIVGMVGNATLL). Residues 103 to 112 (RIIYQNKCMR) are Cytoplasmic-facing. A helical membrane pass occupies residues 113 to 132 (NGPNALIASLALGDLIYVVI). Over 133-159 (DLPINVFKLLAGRWPFDHNDFGVFLCK) the chain is Extracellular. A disulfide bond links cysteine 158 and cysteine 239. The helical transmembrane segment at 160–181 (LFPFLQKSSVGITVLNLCALSV) threads the bilayer. Over 182–205 (DRYRAVASWSRVQGIGIPLITAIE) the chain is Cytoplasmic. A helical membrane pass occupies residues 206–229 (IVSIWILSFILAIPEAIGFVMVPF). The Extracellular segment spans residues 230 to 256 (EYKGEQHRTCMLNATTKFMEFYQDVKD). A helical transmembrane segment spans residues 257–278 (WWLFGFYFCMPLVCTAIFYTLM). The Cytoplasmic segment spans residues 279-306 (TCEMLNRRNGSLRIALSEHLKQRREVAK). The chain crosses the membrane as a helical span at residues 307–328 (TVFCLVVIFALCWFPLHLSRIL). At 329-347 (KKTVYDEMDKNRCELLSFL) the chain is on the extracellular side. A helical transmembrane segment spans residues 348 to 372 (LLMDYIGINLATMNSCINPIALYFV). Residues 373-426 (SKKFKNCFQSCLCCCCHQSKSLMTSVPMNGTSIQWKNQEQNHNTERSSHKDSMN) are Cytoplasmic-facing. Phosphoserine is present on serine 424.

This sequence belongs to the G-protein coupled receptor 1 family. Endothelin receptor subfamily. EDNRA sub-subfamily. In terms of assembly, interacts with HDAC7 and KAT5. In terms of tissue distribution, predominantly expressed in vascular smooth muscle cells of a variety of issues, bronchial smooth muscle cells, myocardium, and the pituitary gland.

It localises to the cell membrane. Receptor for endothelin-1. Mediates its action by association with G proteins that activate a phosphatidylinositol-calcium second messenger system. The rank order of binding affinities for ET-A is: ET1 &gt; ET2 &gt;&gt; ET3. The sequence is that of Endothelin-1 receptor from Rattus norvegicus (Rat).